A 653-amino-acid chain; its full sequence is Hepatocyte growth factor activator serine protease (653 aa).

The signal sequence occupies residues 1 to 34 (MGRQAWISSLCPLPRPCPFLLLLLLLVVPRGAQP). A disordered region spans residues 34–98 (PQAGRNHTEP…SSSPPGGQVL (65 aa)). Positions 35-369 (QAGRNHTEPP…RLTACESLAR (335 aa)) are cleaved as a propeptide — removed in mature form. 3 N-linked (GlcNAc...) asparagine glycosylation sites follow: asparagine 39, asparagine 47, and asparagine 63. The span at 47 to 59 (NVTATPVTPTIPV) shows a compositional bias: low complexity. In terms of domain architecture, Fibronectin type-II spans 100–147 (ESGQPCRFPFRYGGRMLHSCTSEGSAYRKWCATTHNYDRDRAWGYCAE). 19 disulfides stabilise this stretch: cysteine 105/cysteine 130, cysteine 119/cysteine 145, cysteine 161/cysteine 172, cysteine 166/cysteine 183, cysteine 185/cysteine 194, cysteine 199/cysteine 227, cysteine 225/cysteine 234, cysteine 242/cysteine 253, cysteine 247/cysteine 264, cysteine 266/cysteine 275, cysteine 283/cysteine 364, cysteine 304/cysteine 346, cysteine 335/cysteine 359, cysteine 392/cysteine 519, cysteine 430/cysteine 446, cysteine 438/cysteine 508, cysteine 533/cysteine 602, cysteine 565/cysteine 581, and cysteine 592/cysteine 620. An EGF-like 1 domain is found at 157-195 (ILDPCASGPCLNGGTCSSTHDHGSYHCSCPLAFTGKDCG). Residues 197–237 (EKCFDETRYEYFEVGDHWARVSEGHVEQCGCMEGQARCEDT) form the Fibronectin type-I domain. Positions 238–276 (HHTACLSSPCLNGGTCHLIVGTGTSVCTCPLGYAGRFCN) constitute an EGF-like 2 domain. The 82-residue stretch at 283 to 364 (CFLGNGTEYR…SWEYCRLTAC (82 aa)) folds into the Kringle domain. Asparagine 287 carries N-linked (GlcNAc...) asparagine glycosylation. The Peptidase S1 domain maps to 406–644 (IIGGSSSLPG…YVDWINDRIR (239 aa)). The Charge relay system role is filled by histidine 445. The N-linked (GlcNAc...) asparagine glycan is linked to asparagine 466. Residue aspartate 495 is the Charge relay system of the active site. Asparagine 544 carries an N-linked (GlcNAc...) asparagine glycan. Residue serine 596 is the Charge relay system of the active site.

The protein belongs to the peptidase S1 family. Heterodimer of a short chain and a long chain linked by a disulfide bond. In terms of processing, the active form of HGFAC presents in the serum is derived from the COOH-terminal region of the precursor by the cleavage of bonds between Arg-369 and Val-370 and Arg-405 and Ile-406.

The protein resides in the secreted. Serine protease that hydrolyzes the inactive zymogen hepatocyte growth factor (HGFsc) to an activated disulfide-linked heterodimer, then initiating hepatocyte growth factor receptor signaling pathway. In Mus musculus (Mouse), this protein is Hepatocyte growth factor activator serine protease.